Here is a 531-residue protein sequence, read N- to C-terminus: MVDQVNLATEQTSLLYPEVSRKKEELSVNKWTILPALWVGGFLSALDMTIVASLYPVIGSEFKLMNNASYIVTAYLITNTAFQPLYGRLSDIFGRRPTVVFANAAFTLGTFWCGISRSLPELCMARALAGIGGGGLGTMSSIISSDIVSLRERGTWQGITNIVWGIGGSLGGPLGGLIAQRWGWRTAFHFQVPMGILSTILVAWRVRVKPTVRNSNASLLSRIDYLGSFLLVTGITALVVTFNMGGDAFPWVSPVIITLLVSSVLILFAFYWVEKNIAVEPIAPVEILSQPTPLNVCLGNFFNAFCSFVIVYELPLFFETTLLMPSSEAGVRIFPYVISTSVGSLCSGLYMKKTGRYRNLVIAGFFFMLMGIVSFAVLTSFGHRTPLILISLCLAMTGCSYGMNLTSTLIAIISSLAPEEQAVATGLSYLFRATGSVIGISLSQTTTLSILMKQLASNLKDDPDKDDLIRRLRESISIIPNLPKDIQKLVIKSYATAFTWTFALVAIIAFAGFWCSLRIKQFYLHTSVDRS.

At 1 to 30 the chain is on the cytoplasmic side; the sequence is MVDQVNLATEQTSLLYPEVSRKKEELSVNK. Residues 31–51 form a helical membrane-spanning segment; it reads WTILPALWVGGFLSALDMTIV. The Lumenal segment spans residues 52 to 225; sequence ASLYPVIGSE…NASLLSRIDY (174 aa). A helical membrane pass occupies residues 226–246; the sequence is LGSFLLVTGITALVVTFNMGG. Residues 247-252 are Cytoplasmic-facing; sequence DAFPWV. The helical transmembrane segment at 253–273 threads the bilayer; sequence SPVIITLLVSSVLILFAFYWV. The Lumenal segment spans residues 274-297; that stretch reads EKNIAVEPIAPVEILSQPTPLNVC. Residues 298-318 form a helical membrane-spanning segment; that stretch reads LGNFFNAFCSFVIVYELPLFF. The Cytoplasmic portion of the chain corresponds to 319 to 360; the sequence is ETTLLMPSSEAGVRIFPYVISTSVGSLCSGLYMKKTGRYRNL. The chain crosses the membrane as a helical span at residues 361-381; it reads VIAGFFFMLMGIVSFAVLTSF. Topologically, residues 382–385 are lumenal; that stretch reads GHRT. A helical transmembrane segment spans residues 386–406; that stretch reads PLILISLCLAMTGCSYGMNLT. Residues 407–496 lie on the Cytoplasmic side of the membrane; sequence STLIAIISSL…QKLVIKSYAT (90 aa). Residues 497–517 traverse the membrane as a helical segment; that stretch reads AFTWTFALVAIIAFAGFWCSL. Over 518–531 the chain is Lumenal; the sequence is RIKQFYLHTSVDRS.

This sequence belongs to the major facilitator superfamily.

The protein resides in the vacuole membrane. In terms of biological role, efflux transporter. Confers resistance to a variety of toxic compounds. This chain is Multidrug resistance protein fnx1 (fnx1), found in Schizosaccharomyces pombe (strain 972 / ATCC 24843) (Fission yeast).